The primary structure comprises 207 residues: DNA-directed RNA polymerase subunit alpha (207 aa).

The protein belongs to the RNA polymerase alpha chain family. As to quaternary structure, in plastids the minimal PEP RNA polymerase catalytic core is composed of four subunits: alpha, beta, beta', and beta''. When a (nuclear-encoded) sigma factor is associated with the core the holoenzyme is formed, which can initiate transcription.

Its subcellular location is the plastid. It is found in the chloroplast. The catalysed reaction is RNA(n) + a ribonucleoside 5'-triphosphate = RNA(n+1) + diphosphate. DNA-dependent RNA polymerase catalyzes the transcription of DNA into RNA using the four ribonucleoside triphosphates as substrates. The protein is DNA-directed RNA polymerase subunit alpha (rpoA) of Euglena myxocylindracea.